Here is a 266-residue protein sequence, read N- to C-terminus: MNSQFLTKLRQRNPLIHNITNIVAANFSANGLLAIGASPIMSACIEEMEEMAKLSQSLVINIGTLTGKDVEAMLLAGKTANQVGIPVVLDPVGVGATTFRQKTTALLLEQVQFSAIRGNAGELAYIAGVQWSTKGVDAGKGMADIAEIAHLVARKYQCIAVISGETDYISDGKRLAKLNNGTPLFPKITASGCLLSAVCSAFLAVAEQKDYFDALVEGCSAYAIAGEIAAQSLSSTQFGQFTLGLLDQLASLTPEQINQYARISYE.

Residue Met-41 coordinates substrate. 2 residues coordinate ATP: Arg-117 and Ser-163. Position 190 (Ala-190) interacts with substrate.

The protein belongs to the Thz kinase family. Mg(2+) serves as cofactor.

The enzyme catalyses 5-(2-hydroxyethyl)-4-methylthiazole + ATP = 4-methyl-5-(2-phosphooxyethyl)-thiazole + ADP + H(+). Its pathway is cofactor biosynthesis; thiamine diphosphate biosynthesis; 4-methyl-5-(2-phosphoethyl)-thiazole from 5-(2-hydroxyethyl)-4-methylthiazole: step 1/1. Catalyzes the phosphorylation of the hydroxyl group of 4-methyl-5-beta-hydroxyethylthiazole (THZ). The chain is Hydroxyethylthiazole kinase from Histophilus somni (strain 129Pt) (Haemophilus somnus).